The sequence spans 401 residues: Glutamyl-tRNA reductase (401 aa).

Residues 45-48 (TCNR), S101, 106-108 (EDQ), and Q112 each bind substrate. C46 functions as the Nucleophile in the catalytic mechanism. 177–182 (GYGDVG) contributes to the NADP(+) binding site.

Belongs to the glutamyl-tRNA reductase family. Homodimer.

The enzyme catalyses (S)-4-amino-5-oxopentanoate + tRNA(Glu) + NADP(+) = L-glutamyl-tRNA(Glu) + NADPH + H(+). It functions in the pathway porphyrin-containing compound metabolism; protoporphyrin-IX biosynthesis; 5-aminolevulinate from L-glutamyl-tRNA(Glu): step 1/2. Its function is as follows. Catalyzes the NADPH-dependent reduction of glutamyl-tRNA(Glu) to glutamate 1-semialdehyde (GSA). In Clostridium botulinum (strain Eklund 17B / Type B), this protein is Glutamyl-tRNA reductase.